A 102-amino-acid polypeptide reads, in one-letter code: CRISPR-associated endoribonuclease Cas2 1 (102 aa).

Position 17 (aspartate 17) interacts with Mg(2+).

It belongs to the CRISPR-associated endoribonuclease Cas2 protein family. In terms of assembly, homodimer, forms a heterotetramer with a Cas1 homodimer. It depends on Mg(2+) as a cofactor.

Its function is as follows. CRISPR (clustered regularly interspaced short palindromic repeat), is an adaptive immune system that provides protection against mobile genetic elements (viruses, transposable elements and conjugative plasmids). CRISPR clusters contain sequences complementary to antecedent mobile elements and target invading nucleic acids. CRISPR clusters are transcribed and processed into CRISPR RNA (crRNA). Functions as a ssRNA-specific endoribonuclease. Involved in the integration of spacer DNA into the CRISPR cassette. This is CRISPR-associated endoribonuclease Cas2 1 from Rhodospirillum rubrum (strain ATCC 11170 / ATH 1.1.1 / DSM 467 / LMG 4362 / NCIMB 8255 / S1).